A 395-amino-acid polypeptide reads, in one-letter code: Thyrotropin-releasing hormone receptor (395 aa).

The Extracellular portion of the chain corresponds to 1–30; sequence MENGTGDEQNHTGLLLSSQEFVTAEYQVVT. Asn-3 and Asn-10 each carry an N-linked (GlcNAc...) asparagine glycan. The chain crosses the membrane as a helical span at residues 31–53; that stretch reads ILLVLLICGLGIVGNIMVVLVVL. Residues 54–63 lie on the Cytoplasmic side of the membrane; it reads RTKHMRTPTN. A helical transmembrane segment spans residues 64–85; the sequence is CYLVSLAVADLMVLVAAGLPNI. Residues 86–101 lie on the Extracellular side of the membrane; it reads TESLYKSWVYGYVGCL. An intrachain disulfide couples Cys-100 to Cys-181. The chain crosses the membrane as a helical span at residues 102 to 123; that stretch reads CITYLQYLGINASSFSITAFTI. Residues 124-146 lie on the Cytoplasmic side of the membrane; that stretch reads ERYIAICHPIKAQFLCTFSRAKK. Residues 147–170 form a helical membrane-spanning segment; it reads IIIFVWSFASVYCMLWFFLLDLNI. The Extracellular segment spans residues 171–195; the sequence is AVYKDTTVVSCGYKVSRSYYSPIYM. A helical membrane pass occupies residues 196-217; the sequence is MDFGIFYVLPMVLATVLYGLIA. Residues 218 to 268 are Cytoplasmic-facing; that stretch reads RILFLNPIPSDPKENSNTWKNDMAQQNKTVNSKMTNKSFNSTIASRRQVTK. The chain crosses the membrane as a helical span at residues 269 to 290; it reads MLAVVVVLFAFLWMPYRTLVVV. Residues 291–298 lie on the Extracellular side of the membrane; that stretch reads NSFLSSPF. Residues 299 to 321 traverse the membrane as a helical segment; that stretch reads QENWFLLFCRICIYLNSAINPVI. Residues 322-395 are Cytoplasmic-facing; that stretch reads YNLMSQKFRA…IGDTCLSSEA (74 aa).

This sequence belongs to the G-protein coupled receptor 1 family.

The protein resides in the cell membrane. Its function is as follows. Receptor for thyrotropin-releasing hormone (TRH). Upon ligand binding, this G-protein-coupled receptor triggers activation of the phosphatidylinositol (IP3)-calcium-protein kinase C (PKC) pathway. This Gallus gallus (Chicken) protein is Thyrotropin-releasing hormone receptor (TRHR).